We begin with the raw amino-acid sequence, 183 residues long: NADH-quinone oxidoreductase subunit I (183 aa).

2 4Fe-4S ferredoxin-type domains span residues 44-74 and 90-119; these read LNRW…VEAG and RVYQ…MTNE. Residues C54, C57, C60, C64, C99, C102, C105, and C109 each coordinate [4Fe-4S] cluster. Residues 143–183 form a disordered region; that stretch reads QGMEAPPHPMRLGETEKDYYRLGRDDNAAARADEQNSEAVQ. Residues 153 to 176 show a composition bias toward basic and acidic residues; that stretch reads RLGETEKDYYRLGRDDNAAARADE.

This sequence belongs to the complex I 23 kDa subunit family. NDH-1 is composed of 14 different subunits. Subunits NuoA, H, J, K, L, M, N constitute the membrane sector of the complex. It depends on [4Fe-4S] cluster as a cofactor.

It is found in the cell membrane. The catalysed reaction is a quinone + NADH + 5 H(+)(in) = a quinol + NAD(+) + 4 H(+)(out). Its function is as follows. NDH-1 shuttles electrons from NADH, via FMN and iron-sulfur (Fe-S) centers, to quinones in the respiratory chain. The immediate electron acceptor for the enzyme in this species is believed to be ubiquinone. Couples the redox reaction to proton translocation (for every two electrons transferred, four hydrogen ions are translocated across the cytoplasmic membrane), and thus conserves the redox energy in a proton gradient. This is NADH-quinone oxidoreductase subunit I from Thermobifida fusca (strain YX).